The primary structure comprises 557 residues: MATSSAWKLDDHPKLPKGKTIAVIVLDGWGESAPDQYNCIHNAPTPAMDSLKHGAPDTWTLIKAHGTAVGLPSEDDMGNSEVGHNALGAGRIFAQGAKLCDQALASGKIFEGEGFKYVSESFETNTLHLVGLLSDGGVHSRLDQLQLLIKGSAERGAKRIRVHILTDGRDVLDGSSVGFVETLEADLVALRENGVDAQIASGGGRMYVTLDRYENDWEVVKRGWDAQVLGEAPHKFKNAVEAVKTLRKEPGANDQYLPPFVIVDESGKAVGPIVDGDAVVTFNFRADRMVMHAKALEYEDFDKFDRVRYPKIRYAGMLQYDGELKLPSRYLVSPPEIDRTSGEYLTHNGVSTFACSETVKFGHVTFFWNGNRSGYFNEKLEEYVEIPSDSGISFNVQPKMKALEIGEKARDAILSGKFDQVRVNIPNGDMVGHTGDIEATVVACEAADLAVKMIFDAIEQVKGIYVVTADHGNAEDMVKRDKSGKPALDKEGKLQILTSHTLKPVPIAIGGPGLAQGVRFRKDLETPGLANVAATVMNLHGFVAPSDYEPTLIEVVE.

Mn(2+) contacts are provided by Asp27 and Ser80. Catalysis depends on Ser80, which acts as the Phosphoserine intermediate. Residues His139, 169-170 (RD), Arg205, Arg212, 285-288 (RADR), and Lys360 each bind substrate. Residues Asp429, His433, Asp470, His471, and His500 each coordinate Mn(2+).

Belongs to the BPG-independent phosphoglycerate mutase family. As to quaternary structure, monomer. Mn(2+) is required as a cofactor.

Its subcellular location is the cytoplasm. The catalysed reaction is (2R)-2-phosphoglycerate = (2R)-3-phosphoglycerate. It functions in the pathway carbohydrate degradation; glycolysis; pyruvate from D-glyceraldehyde 3-phosphate: step 3/5. Its function is as follows. Catalyzes the interconversion of 2-phosphoglycerate (2-PGA) and 3-phosphoglycerate (3-PGA). Required for guard cell function (e.g. blue light-, abscisic acid- (ABA), and low CO(2)-regulated stomatal movements) and fertility (e.g. pollen grains production). This is 2,3-bisphosphoglycerate-independent phosphoglycerate mutase 1 (PGM1) from Arabidopsis thaliana (Mouse-ear cress).